The primary structure comprises 375 residues: Lipid-A-disaccharide synthase (375 aa).

It belongs to the LpxB family.

It catalyses the reaction a lipid X + a UDP-2-N,3-O-bis[(3R)-3-hydroxyacyl]-alpha-D-glucosamine = a lipid A disaccharide + UDP + H(+). Its pathway is bacterial outer membrane biogenesis; LPS lipid A biosynthesis. Functionally, condensation of UDP-2,3-diacylglucosamine and 2,3-diacylglucosamine-1-phosphate to form lipid A disaccharide, a precursor of lipid A, a phosphorylated glycolipid that anchors the lipopolysaccharide to the outer membrane of the cell. The sequence is that of Lipid-A-disaccharide synthase from Pseudomonas putida (strain ATCC 47054 / DSM 6125 / CFBP 8728 / NCIMB 11950 / KT2440).